A 236-amino-acid chain; its full sequence is NEP1-interacting protein 1 (236 aa).

At 1 to 44 (MASSRFQSGFCPISSCPSLENFIERIKDACRFTLSAVLGTILSA) the chain is on the lumenal, thylakoid side. The helical transmembrane segment at 45–65 (VLTFFFALVGTLLGALTGALI) threads the bilayer. Over 66–78 (GQETESGFIRGAA) the chain is Stromal. Residues 79–99 (VGAISGAVFSIEVFESSLVLW) traverse the membrane as a helical segment. At 100 to 104 (KSNES) the chain is on the lumenal, thylakoid side. A helical transmembrane segment spans residues 105-125 (RFGCLLYLIDVIVSLISGRLV). The Stromal segment spans residues 126–236 (RERIGPAMLS…GSCPMCRRDL (111 aa)). The RING-type; atypical zinc finger occupies 191-233 (CSVCLQDFQLGETVRSLPHCHHMFHLPCIDNWLFRHGSCPMCR).

The protein belongs to the RING-type zinc finger family. NIP subfamily. Interacts with RPOT2.

The protein resides in the plastid. It localises to the chloroplast thylakoid membrane. Functionally, intrinsic thylakoid membrane protein that fixes RPOT2 on the stromal side of the thylakoid membrane. The polypeptide is NEP1-interacting protein 1 (NIP1) (Arabidopsis thaliana (Mouse-ear cress)).